The following is a 410-amino-acid chain: Multidrug resistance protein MdtA (410 aa).

The signal sequence occupies residues 1 to 21 (MNNRYPVMKKGLIVLVVIAVA). The tract at residues 36–56 (SDGDLSGQSAHGKRGNGAHKP) is disordered.

This sequence belongs to the membrane fusion protein (MFP) (TC 8.A.1) family. As to quaternary structure, part of a tripartite efflux system composed of MdtA, MdtB and MdtC.

The protein resides in the cell inner membrane. In Pantoea ananatis (strain AJ13355), this protein is Multidrug resistance protein MdtA.